The chain runs to 131 residues: uncharacterized protein (131 aa).

A helical transmembrane segment spans residues 17 to 39; that stretch reads VILLILILLPVVFLHIMLATWGL.

The protein resides in the membrane. This is an uncharacterized protein from Archaeoglobus fulgidus (strain ATCC 49558 / DSM 4304 / JCM 9628 / NBRC 100126 / VC-16).